Reading from the N-terminus, the 368-residue chain is CST complex subunit STN1 (368 aa).

Positions 2-192 (AVSLGDDDAD…KCYDQPFKMP (191 aa)) are interaction with CTC1. The OB DNA-binding region spans 58–162 (VDVLGIVVYK…EIKATSFYKV (105 aa)). 2 winged helix-turn-helix (wHTH) regions span residues 201–295 (AGGS…NVTE) and 296–368 (QDKD…YIVL).

The protein belongs to the CTC1 family. As to quaternary structure, component of the CST complex.

The protein resides in the nucleus. Its subcellular location is the chromosome. It is found in the telomere. Its function is as follows. Component of the CST complex proposed to act as a specialized replication factor promoting DNA replication under conditions of replication stress or natural replication barriers such as the telomere duplex. The CST complex binds single-stranded DNA with high affinity in a sequence-independent manner, while isolated subunits bind DNA with low affinity by themselves. Initially the CST complex has been proposed to protect telomeres from DNA degradation. However, the CST complex has been shown to be involved in several aspects of telomere replication. The chain is CST complex subunit STN1 from Danio rerio (Zebrafish).